A 1363-amino-acid polypeptide reads, in one-letter code: MFLILLISLPMALAVIGDLKCTTVSINDVDTGVPSVSTDTVDVTNGLGTYYVLDRVYLNTTLLLNGYYPTSGSTYRNMALKGTLLLSTLWFKPPFLSDFINGIFAKVKNTKVIKNGVMYSEFPAITIGSTFVNTSYSVVVQPHTTNLDNKLQGLLEISVCQYTMCEYPHTICHPNLGNRRIELWHWDTGVVSCLYKRNFTYDVNADYLYFHFYQEGGTFYAYFTDTGVVTKFLFNVYLGTVLSHYYVMPLTCNSAMTLEYWVTPLTSKQYLLAFNQDGVIFNAVDCKSDFMSEIKCKTLSIAPSTGVYELNGYTVQPIADVYRRIPNLPDCNIEAWLNDKSVPSPLNWERKTFSNCNFNMSSLMSFIQADSFTCNNIDAAKIYGMCFSSITIDKFAIPNGRKVDLQLGNLGYLQSFNYRIDTTATSCQLYYNLPAANVSVSRFNPSTWNRRFGFTEQSVFKPQPVGVFTDHDVVYAQHCFKAPTNFCPCKLDGSLCVGSGSGIDAGYKNSGIGTCPAGTNYLTCHNAAQCDCLCTPDPITSKSTGPYKCPQTKYLVGIGEHCSGLAIKSDYCGGNPCTCQPQAFLGWSVDSCLQGDRCNIFANFILHDVNSGTTCSTDLQKSNTDIILGVCVNYDLYGITGQGIFVEVNATYYNSWQNLLYDSNGNLYGFRDYLTNRTFMIRSCYSGRVSAAFHANSSEPALLFRNIKCNYVFNNTLSRQLQPINYFDSYLGCVVNADNSTSSAVQTCDLTVGSGYCVDYSTKRRSRRAITTGYRFTNFEPFTVNSVNDSLEPVGGLYEIQIPSEFTIGNMEEFIQISSPKVTIDCSAFVCGDYAACKSQLVEYGSFCDNINAILTEVNELLDTTQLQVANSLMNGVTLSTKLKDGVNFNVDDINFSPVLGCLGSDCNKVSSRSAIEDLLFSKVKLSDVGFVEAYNNCTGGAEIRDLICVQSYNGIKVLPPLLSENQISGYTLAATSASLFPPWSAAAGVPFYLNVQYRINGIGVTMDVLSQNQKLIANAFNNALDAIQEGFDATNSALVKIQAVVNANAEALNNLLQQLSNRFGAISSSLQEILSRLDALEAQAQIDRLINGRLTALNAYVSQQLSDSTLVKFSAAQAMEKVNECVKSQSSRINFCGNGNHIISLVQNAPYGLYFIHFSYVPTKYVTAKVSPGLCIAGDRGIAPKSGYFVNVNNTWMFTGSGYYYPEPITGNNVVVMSTCAVNYTKAPDVMLNISTPNLPDFKEELDQWFKNQTSVAPDLSLDYINVTFLDLQDEMNRLQEAIKVLNQSYINLKDIGTYEYYVKWPWYVWLLIGLAGVAMLVLLFFICCCTGCGTSCFKKCGGCCDDYTGHQELVIKTSHDD.

An N-terminal signal peptide occupies residues 1-13 (MFLILLISLPMAL). Topologically, residues 14–1307 (AVIGDLKCTT…GTYEYYVKWP (1294 aa)) are extracellular. The region spanning 15–298 (VIGDLKCTTV…DFMSEIKCKT (284 aa)) is the BetaCoV S1-NTD domain. Intrachain disulfides connect Cys-21–Cys-165, Cys-160–Cys-193, Cys-172–Cys-252, Cys-286–Cys-296, and Cys-331–Cys-356. Residues Asn-59 and Asn-133 are each glycosylated (N-linked (GlcNAc...) asparagine; by host). Residue Asn-198 is glycosylated (N-linked (GlcNAc...) asparagine; by host). The 289-residue stretch at 329–617 (PDCNIEAWLN…DVNSGTTCST (289 aa)) folds into the BetaCoV S1-CTD domain. Asn-359 is a glycosylation site (N-linked (GlcNAc...) asparagine; by host). Disulfide bonds link Cys-374–Cys-427 and Cys-386–Cys-615. Asn-437, Asn-649, Asn-676, Asn-696, Asn-714, Asn-739, and Asn-788 each carry an N-linked (GlcNAc...) asparagine; by host glycan. 2 fusion peptide regions span residues 914–935 (SAIEDLLFSKVKLSDVGFVEAY) and 933–953 (EAYNNCTGGAEIRDLICVQSY). Asn-937 carries an N-linked (GlcNAc...) asparagine; by host glycan. A disulfide bond links Cys-938 and Cys-949. The heptad repeat 1 stretch occupies residues 1014–1064 (QKLIANAFNNALDAIQEGFDATNSALVKIQAVVNANAEALNNLLQQLSNRF). Residues 1043 to 1087 (QAVVNANAEALNNLLQQLSNRFGAISSSLQEILSRLDALEAQAQI) are a coiled coil. Asn-1194, Asn-1224, Asn-1234, Asn-1253, Asn-1267, and Asn-1288 each carry an N-linked (GlcNAc...) asparagine; by host glycan. Residues 1258 to 1296 (APDLSLDYINVTFLDLQDEMNRLQEAIKVLNQSYINLKD) are heptad repeat 2. Residues 1269 to 1297 (TFLDLQDEMNRLQEAIKVLNQSYINLKDI) adopt a coiled-coil conformation. A helical transmembrane segment spans residues 1308–1328 (WYVWLLIGLAGVAMLVLLFFI). Residues 1329–1363 (CCCTGCGTSCFKKCGGCCDDYTGHQELVIKTSHDD) are Cytoplasmic-facing. A KxHxx motif is present at residues 1359-1363 (TSHDD).

The protein belongs to the betacoronaviruses spike protein family. As to quaternary structure, homotrimer; each monomer consists of a S1 and a S2 subunit. The resulting peplomers protrude from the virus surface as spikes. In terms of processing, specific enzymatic cleavages in vivo yield mature proteins. The precursor is processed into S1 and S2 by host cell furin or another cellular protease to yield the mature S1 and S2 proteins. Additionally, a second cleavage leads to the release of a fusion peptide after viral attachment to host cell receptor. The cytoplasmic Cys-rich domain is palmitoylated. Spike glycoprotein is digested within host endosomes.

It localises to the virion membrane. The protein localises to the host endoplasmic reticulum-Golgi intermediate compartment membrane. It is found in the host cell membrane. Its function is as follows. Attaches the virion to the cell membrane by interacting with host receptor, initiating the infection. Mediates fusion of the virion and cellular membranes by acting as a class I viral fusion protein. Under the current model, the protein has at least three conformational states: pre-fusion native state, pre-hairpin intermediate state, and post-fusion hairpin state. During viral and target cell membrane fusion, the coiled coil regions (heptad repeats) assume a trimer-of-hairpins structure, positioning the fusion peptide in close proximity to the C-terminal region of the ectodomain. The formation of this structure appears to drive apposition and subsequent fusion of viral and target cell membranes. Functionally, acts as a viral fusion peptide which is unmasked following S2 cleavage occurring upon virus endocytosis. The sequence is that of Spike glycoprotein from Bos taurus (Bovine).